The chain runs to 188 residues: Ribosome-recycling factor (188 aa).

It belongs to the RRF family.

It is found in the cytoplasm. Functionally, responsible for the release of ribosomes from messenger RNA at the termination of protein biosynthesis. May increase the efficiency of translation by recycling ribosomes from one round of translation to another. The polypeptide is Ribosome-recycling factor (Blochmanniella pennsylvanica (strain BPEN)).